We begin with the raw amino-acid sequence, 885 residues long: Alanine--tRNA ligase (885 aa).

Positions 574, 578, 685, and 689 each coordinate Zn(2+).

The protein belongs to the class-II aminoacyl-tRNA synthetase family. Requires Zn(2+) as cofactor.

Its subcellular location is the cytoplasm. It carries out the reaction tRNA(Ala) + L-alanine + ATP = L-alanyl-tRNA(Ala) + AMP + diphosphate. In terms of biological role, catalyzes the attachment of alanine to tRNA(Ala) in a two-step reaction: alanine is first activated by ATP to form Ala-AMP and then transferred to the acceptor end of tRNA(Ala). Also edits incorrectly charged Ser-tRNA(Ala) and Gly-tRNA(Ala) via its editing domain. The polypeptide is Alanine--tRNA ligase (Deinococcus geothermalis (strain DSM 11300 / CIP 105573 / AG-3a)).